The sequence spans 116 residues: MEYYIRETLITDFQDVKTLKNKRKCFSFFFELRLFSPQCLFIVYFFYLLHVRINTSPLFIKTTTRPTALIHITKYSEALASRLLKGHMTQLSLRTILPPAHTKNLHRQQPTTWLDS.

This is an uncharacterized protein from Schizosaccharomyces pombe (strain 972 / ATCC 24843) (Fission yeast).